The sequence spans 485 residues: Glutamate--tRNA ligase (485 aa).

Positions Pro10–Asn20 match the 'HIGH' region motif. The 'KMSKS' region motif lies at Lys253–Arg257. Lys256 lines the ATP pocket.

Belongs to the class-I aminoacyl-tRNA synthetase family. Glutamate--tRNA ligase type 1 subfamily. Monomer.

Its subcellular location is the cytoplasm. It carries out the reaction tRNA(Glu) + L-glutamate + ATP = L-glutamyl-tRNA(Glu) + AMP + diphosphate. Catalyzes the attachment of glutamate to tRNA(Glu) in a two-step reaction: glutamate is first activated by ATP to form Glu-AMP and then transferred to the acceptor end of tRNA(Glu). The sequence is that of Glutamate--tRNA ligase from Enterococcus faecalis (strain ATCC 700802 / V583).